Here is a 92-residue protein sequence, read N- to C-terminus: Cytochrome c2 (92 aa).

Residues cysteine 12, cysteine 15, histidine 16, and methionine 66 each contribute to the heme c site.

This sequence belongs to the cytochrome c family. Binds 1 heme c group covalently per subunit.

In terms of biological role, cytochrome c2 is found mainly in purple, non-sulfur, photosynthetic bacteria where it functions as the electron donor to the oxidized bacteriochlorophyll in the photophosphorylation pathway. However, it may also have a role in the respiratory chain and is found in some non-photosynthetic bacteria. The chain is Cytochrome c2 from Rhodocyclus tenuis (Rhodospirillum tenue).